A 574-amino-acid chain; its full sequence is Isocitrate dehydrogenase kinase/phosphatase (574 aa).

ATP contacts are provided by residues Ala-315–Met-321 and Lys-336. Asp-371 is a catalytic residue.

This sequence belongs to the AceK family.

It is found in the cytoplasm. The enzyme catalyses L-seryl-[isocitrate dehydrogenase] + ATP = O-phospho-L-seryl-[isocitrate dehydrogenase] + ADP + H(+). Its function is as follows. Bifunctional enzyme which can phosphorylate or dephosphorylate isocitrate dehydrogenase (IDH) on a specific serine residue. This is a regulatory mechanism which enables bacteria to bypass the Krebs cycle via the glyoxylate shunt in response to the source of carbon. When bacteria are grown on glucose, IDH is fully active and unphosphorylated, but when grown on acetate or ethanol, the activity of IDH declines drastically concomitant with its phosphorylation. The polypeptide is Isocitrate dehydrogenase kinase/phosphatase (Escherichia coli (strain SMS-3-5 / SECEC)).